We begin with the raw amino-acid sequence, 83 residues long: Toxin BmKBT (83 aa).

The N-terminal stretch at 1-19 is a signal peptide; it reads MKAALLLVIFSLMLIGVLT. The LCN-type CS-alpha/beta domain maps to 21–81; it reads KSGYPTDHEG…TWSRATNKCR (61 aa). 4 cysteine pairs are disulfide-bonded: cysteine 31-cysteine 80, cysteine 35-cysteine 54, cysteine 41-cysteine 61, and cysteine 45-cysteine 63. Residue lysine 83 is a propeptide, removed by a carboxypeptidase.

Belongs to the long (4 C-C) scorpion toxin superfamily. Sodium channel inhibitor family. Beta subfamily. In terms of tissue distribution, expressed by the venom gland.

The protein resides in the secreted. In terms of biological role, this toxin increases the peak sodium current, slows down the inactivation of sodium channels (Nav), and prolongs the action potential of dorsal root ganglion neurons, which indicates that it behaves as a classical alpha-toxin. It binds to mammal brain and insect sodium channels, but with a different manner. This peptide may bind to a distinct receptor site on mammal brain sodium channels, which is unconnected with that for BmKAS (a beta-toxin), BmKIT2 (a beta-toxin) or BmK I (an alpha toxin). In contrast, the receptor site for BmKabT on insect sodium channels might be closely related to that for the beta-insect depressant toxin BmKIT2. Possesses potent toxicity in mice but induces only paralysis in cotton bollworm. In Olivierus martensii (Manchurian scorpion), this protein is Toxin BmKBT.